A 415-amino-acid chain; its full sequence is Serine hydroxymethyltransferase (415 aa).

(6S)-5,6,7,8-tetrahydrofolate contacts are provided by residues L120 and 124-126 (GHL). An N6-(pyridoxal phosphate)lysine modification is found at K229.

The protein belongs to the SHMT family. Homodimer. The cofactor is pyridoxal 5'-phosphate.

It localises to the cytoplasm. The enzyme catalyses (6R)-5,10-methylene-5,6,7,8-tetrahydrofolate + glycine + H2O = (6S)-5,6,7,8-tetrahydrofolate + L-serine. Its pathway is one-carbon metabolism; tetrahydrofolate interconversion. The protein operates within amino-acid biosynthesis; glycine biosynthesis; glycine from L-serine: step 1/1. Its function is as follows. Catalyzes the reversible interconversion of serine and glycine with tetrahydrofolate (THF) serving as the one-carbon carrier. This reaction serves as the major source of one-carbon groups required for the biosynthesis of purines, thymidylate, methionine, and other important biomolecules. Also exhibits THF-independent aldolase activity toward beta-hydroxyamino acids, producing glycine and aldehydes, via a retro-aldol mechanism. This chain is Serine hydroxymethyltransferase, found in Desulforudis audaxviator (strain MP104C).